Consider the following 201-residue polypeptide: Protease (201 aa).

Active-site residues include H53, D70, and C121.

It belongs to the peptidase C5 family. As to quaternary structure, interacts with protease cofactor pVI-C; this interaction is necessary for protease activation.

The protein resides in the virion. It is found in the host nucleus. It catalyses the reaction Cleaves proteins of the adenovirus and its host cell at two consensus sites: -Yaa-Xaa-Gly-Gly-|-Xaa- and -Yaa-Xaa-Gly-Xaa-|-Gly- (in which Yaa is Met, Ile or Leu, and Xaa is any amino acid).. With respect to regulation, requires DNA and protease cofactor for maximal activation. Inside nascent virions, becomes partially activated by binding to the viral DNA, allowing it to cleave the cofactor that binds to the protease and fully activates it. Actin, like the viral protease cofactor, seems to act as a cofactor in the cleavage of cytokeratin 18 and of actin itself. In terms of biological role, cleaves viral precursor proteins (pTP, pIIIa, pVI, pVII, pVIII, and pX) inside newly assembled particles giving rise to mature virions. Protease complexed to its cofactor slides along the viral DNA to specifically locate and cleave the viral precursors. Mature virions have a weakened organization compared to the unmature virions, thereby facilitating subsequent uncoating. Without maturation, the particle lacks infectivity and is unable to uncoat. Late in adenovirus infection, in the cytoplasm, may participate in the cytoskeleton destruction. Cleaves host cell cytoskeletal keratins K7 and K18. This chain is Protease, found in Equine adenovirus B serotype 2 (EAdV-2).